The sequence spans 105 residues: Dicamba O-demethylase, ferredoxin component (105 aa).

The 104-residue stretch at 2–105 folds into the 2Fe-2S ferredoxin-type domain; it reads PQITVVNQSG…GIKVTIAQED (104 aa). [2Fe-2S] cluster is bound by residues C40, C46, C49, and C86.

This sequence belongs to the adrenodoxin/putidaredoxin family. As to quaternary structure, monomer. The dicamba O-demethylase multicomponent enzyme system is composed of an oxygenase component (DdmC) and an electron transfer component formed by a ferredoxin reductase (DdmA1) and a ferredoxin (DdmB). In vitro, dicamba O-demethylase assays in which DdmA2 is substituted for DdmA1 demonstrate that the two enzymes possess nearly identical activities. The cofactor is [2Fe-2S] cluster.

Its function is as follows. Component of the dicamba O-demethylase multicomponent enzyme system involved in the degradation of the herbicide dicamba. In vitro, functions as an intermediate electron transfer protein. The protein is Dicamba O-demethylase, ferredoxin component of Stenotrophomonas maltophilia (Pseudomonas maltophilia).